Reading from the N-terminus, the 471-residue chain is Ubiquitin carboxyl-terminal hydrolase calypso (471 aa).

In terms of domain architecture, UCH catalytic spans Gly-45–Pro-276. The active-site Nucleophile is the Cys-131. The active-site Proton donor is His-213. Coiled-coil stretches lie at residues Trp-240 to Glu-256 and Gly-298 to Thr-324. The disordered stretch occupies residues Asp-307–Leu-326. Polar residues predominate over residues Asn-314 to Leu-326. The ULD domain maps to Asn-375–Pro-403. Residues Lys-405 to Lys-471 form a positively charged C-terminal tail required for binding nucleosomes region. Residues Ala-412–Lys-471 form a disordered region. Positions Ser-420 to Ala-447 are enriched in low complexity. A compositionally biased stretch (basic residues) spans Pro-457 to Lys-471.

It belongs to the peptidase C12 family. BAP1 subfamily. Catalytic component of the polycomb repressive deubiquitinase (PR-DUB) complex, at least composed of caly/calypso, Asx and sba (MBD5/6 homolog). The PR-DUB complex associates with nucleosomes to mediate deubiquitination of histone H2AK118ub1 substrates; the association requires the positively charged C-terminal tail of caly, probably due to direct binding of DNA. Interacts (via ULD domain) with Asx (via DEUBAD domain); the interaction produces a stable heterodimer with a composite binding site for ubiquitin. Homodimerizes (via coiled-coil hinge-region between the UCH and ULD domains) to mediate assembly of 2 copies of the caly-Asx heterodimer into a bisymmetric tetramer; dimerization enhances PR-DUB association with nucleosomes.

It localises to the nucleus. The enzyme catalyses Thiol-dependent hydrolysis of ester, thioester, amide, peptide and isopeptide bonds formed by the C-terminal Gly of ubiquitin (a 76-residue protein attached to proteins as an intracellular targeting signal).. Catalytic component of the polycomb repressive deubiquitinase (PR-DUB) complex, a complex that specifically mediates deubiquitination of histone H2A monoubiquitinated at 'Lys-119' (H2AK118ub1). Mediates bisymmetric organization of the PR-DUB complex and is involved in association with nucleosomes to mediate deubiquitination. Does not deubiquitinate monoubiquitinated histone H2B. Required to maintain the transcriptionally repressive state of homeotic genes throughout development. The PR-DUB complex has weak or no activity toward 'Lys-48'- and 'Lys-63'-linked polyubiquitin chains. Polycomb group (PcG) protein. This Drosophila melanogaster (Fruit fly) protein is Ubiquitin carboxyl-terminal hydrolase calypso.